The chain runs to 342 residues: Phosphate acyltransferase (342 aa).

It belongs to the PlsX family. As to quaternary structure, homodimer. Probably interacts with PlsY.

It is found in the cytoplasm. It carries out the reaction a fatty acyl-[ACP] + phosphate = an acyl phosphate + holo-[ACP]. The protein operates within lipid metabolism; phospholipid metabolism. Functionally, catalyzes the reversible formation of acyl-phosphate (acyl-PO(4)) from acyl-[acyl-carrier-protein] (acyl-ACP). This enzyme utilizes acyl-ACP as fatty acyl donor, but not acyl-CoA. This is Phosphate acyltransferase from Actinobacillus succinogenes (strain ATCC 55618 / DSM 22257 / CCUG 43843 / 130Z).